Consider the following 254-residue polypeptide: tRNA (guanine-N(7)-)-methyltransferase (254 aa).

The segment at 1 to 34 is disordered; it reads MNTNTPAHPPEGAPLSEATQAALASAEHAPDSPG. 4 residues coordinate S-adenosyl-L-methionine: glutamate 87, glutamate 112, aspartate 139, and aspartate 162. Residue aspartate 162 is part of the active site. Residues lysine 166, aspartate 198, and 233–236 contribute to the substrate site; that span reads TKFE.

This sequence belongs to the class I-like SAM-binding methyltransferase superfamily. TrmB family.

The enzyme catalyses guanosine(46) in tRNA + S-adenosyl-L-methionine = N(7)-methylguanosine(46) in tRNA + S-adenosyl-L-homocysteine. The protein operates within tRNA modification; N(7)-methylguanine-tRNA biosynthesis. Its function is as follows. Catalyzes the formation of N(7)-methylguanine at position 46 (m7G46) in tRNA. In Bordetella pertussis (strain Tohama I / ATCC BAA-589 / NCTC 13251), this protein is tRNA (guanine-N(7)-)-methyltransferase.